The chain runs to 177 residues: Large ribosomal subunit protein bL17 (177 aa).

Residues 136–177 (AEEEAPAVEAEATEAVEAPVEETAAAEAEAPAEEAADAEKAE) are disordered. Acidic residues predominate over residues 138–149 (EEAPAVEAEATE). The segment covering 150–164 (AVEAPVEETAAAEAE) has biased composition (low complexity).

It belongs to the bacterial ribosomal protein bL17 family. Part of the 50S ribosomal subunit. Contacts protein L32.

The protein is Large ribosomal subunit protein bL17 of Bifidobacterium longum (strain NCC 2705).